A 154-amino-acid chain; its full sequence is SsrA-binding protein (154 aa).

This sequence belongs to the SmpB family.

The protein localises to the cytoplasm. In terms of biological role, required for rescue of stalled ribosomes mediated by trans-translation. Binds to transfer-messenger RNA (tmRNA), required for stable association of tmRNA with ribosomes. tmRNA and SmpB together mimic tRNA shape, replacing the anticodon stem-loop with SmpB. tmRNA is encoded by the ssrA gene; the 2 termini fold to resemble tRNA(Ala) and it encodes a 'tag peptide', a short internal open reading frame. During trans-translation Ala-aminoacylated tmRNA acts like a tRNA, entering the A-site of stalled ribosomes, displacing the stalled mRNA. The ribosome then switches to translate the ORF on the tmRNA; the nascent peptide is terminated with the 'tag peptide' encoded by the tmRNA and targeted for degradation. The ribosome is freed to recommence translation, which seems to be the essential function of trans-translation. In Enterococcus faecalis (strain ATCC 700802 / V583), this protein is SsrA-binding protein.